The sequence spans 1053 residues: CRISPR-associated endonuclease Cas9 (1053 aa).

The segment at 1–41 (MKRNYILGLDIGITSVGYGIIDYETRDVIDAGVRLFKEANV) is ruvC-I. Aspartate 10 serves as the catalytic For RuvC-like nuclease domain. Aspartate 10 serves as a coordination point for Mg(2+). The recognition lobe stretch occupies residues 41–426 (VENNEGRRSK…IFNRLKLVPK (386 aa)). The tract at residues 435–481 (EIPTTLVDDFILSPVVKRSFIQSIKVINAIIKKYGLPNDIIIELARE) is ruvC-II. Glutamate 477 and glutamate 481 together coordinate Mg(2+). In terms of domain architecture, HNH Cas9-type spans 480-646 (REKNSKDAQK…VQKDFINRNL (167 aa)). Histidine 557 functions as the Proton acceptor for HNH nuclease domain in the catalytic mechanism. A ruvC-III region spans residues 650-775 (RYATRGLMNL…FKDYKYSHRV (126 aa)). Position 701 (histidine 701) interacts with Mg(2+). Tyrosine 789 is an RNA binding site. 2 PAM substrate-binding regions span residues 882–889 (YYGNKLNA) and 985–993 (NNDLLNRIE). A PAM-interacting domain (PI) region spans residues 910 to 1053 (KPYRFDVYLD…KKHPQIIKKG (144 aa)).

The protein belongs to the CRISPR-associated Cas9 family. Subtype II-A subfamily. In terms of assembly, monomer. Binds crRNA and tracrRNA. Mg(2+) is required as a cofactor.

Its function is as follows. CRISPR (clustered regularly interspaced short palindromic repeat) is an adaptive immune system that provides protection against mobile genetic elements (viruses, transposable elements and conjugative plasmids). CRISPR clusters contain spacers, sequences complementary to antecedent mobile elements, and target invading nucleic acids. CRISPR clusters are transcribed and processed into CRISPR RNA (crRNA). In type II CRISPR systems correct processing of pre-crRNA requires a trans-encoded small RNA (tracrRNA), endogenous ribonuclease 3 (rnc) and this protein. The tracrRNA serves as a guide for ribonuclease 3-aided processing of pre-crRNA. Subsequently Cas9/crRNA/tracrRNA endonucleolytically cleaves linear or circular dsDNA target complementary to the spacer; Cas9 is inactive in the absence of the 2 guide RNAs (gRNA). Cas9 recognizes the protospacer adjacent motif (PAM) in the CRISPR repeat sequences to help distinguish self versus nonself, as targets within the bacterial CRISPR locus do not have PAMs. PAM recognition is also required for catalytic activity. The polypeptide is CRISPR-associated endonuclease Cas9 (Staphylococcus aureus).